Reading from the N-terminus, the 696-residue chain is Polyribonucleotide nucleotidyltransferase (696 aa).

Mg(2+)-binding residues include Asp486 and Asp492. One can recognise a KH domain in the interval 553-612; sequence PRIIVRNIPKDRIGELIGPGGKNVRGISELTGAELYIEDDGRVTISGSNQESAEKAAKMV. The region spanning 622-690 is the S1 motif domain; it reads GKIYEGKVKR…KTGKIDLSRK (69 aa).

Belongs to the polyribonucleotide nucleotidyltransferase family. Mg(2+) is required as a cofactor.

The protein localises to the cytoplasm. The enzyme catalyses RNA(n+1) + phosphate = RNA(n) + a ribonucleoside 5'-diphosphate. Functionally, involved in mRNA degradation. Catalyzes the phosphorolysis of single-stranded polyribonucleotides processively in the 3'- to 5'-direction. In Leptospira borgpetersenii serovar Hardjo-bovis (strain L550), this protein is Polyribonucleotide nucleotidyltransferase.